Reading from the N-terminus, the 765-residue chain is Protein transport protein Sec23A (765 aa).

Cysteine 61, cysteine 66, cysteine 85, and cysteine 88 together coordinate Zn(2+). The stretch at 632 to 718 (PEPVLLDSSS…EHGGSQARFL (87 aa)) is one Gelsolin-like repeat.

The protein belongs to the SEC23/SEC24 family. SEC23 subfamily. In terms of assembly, COPII is composed of at least five proteins: the Sec23/24 complex, the Sec13/31 complex and Sar1.

Its subcellular location is the cytoplasmic vesicle. The protein resides in the COPII-coated vesicle membrane. The protein localises to the endoplasmic reticulum membrane. It is found in the cytoplasm. It localises to the cytosol. Functionally, component of the coat protein complex II (COPII) which promotes the formation of transport vesicles from the endoplasmic reticulum (ER). The coat has two main functions, the physical deformation of the endoplasmic reticulum membrane into vesicles and the selection of cargo molecules for their transport to the Golgi complex. The sequence is that of Protein transport protein Sec23A from Xenopus tropicalis (Western clawed frog).